The sequence spans 1124 residues: Sodium/hydrogen exchanger 11 (1124 aa).

11 helical membrane-spanning segments follow: residues 25–45, 52–72, 90–110, 120–140, 179–199, 224–244, 254–274, 305–325, 335–355, 372–392, and 405–425; these read LVEE…GGLL, CEVI…HMAY, FSLY…DVEF, VLLT…YVVI, IYID…SIFF, DILG…CILA, IILC…LGMS, IFSS…IGCG, IPFI…TILL, GVVI…APDV, and MFIL…SYVM. Residues asparagine 447 and asparagine 473 are each glycosylated (N-linked (GlcNAc...) asparagine). Transmembrane regions (helical) follow at residues 612 to 632, 641 to 661, 674 to 694, and 706 to 726; these read TGQI…WPMA, ISIN…KIII, LEFF…FVKL, and VIMG…IVPI. The interval 642 to 723 is ion transport-like; it reads SINYYFMFLY…IRFLPLFKII (82 aa). 867–999 is an a nucleoside 3',5'-cyclic phosphate binding site; sequence IWLEGKDVLI…EYKIWLKLAL (133 aa).

The protein belongs to the monovalent cation:proton antiporter 1 (CPA1) transporter (TC 2.A.36) family.

The protein resides in the membrane. Functionally, involved in pH regulation. In Homo sapiens (Human), this protein is Sodium/hydrogen exchanger 11 (SLC9C2).